Consider the following 567-residue polypeptide: Glutamine-dependent NAD(+) synthetase (567 aa).

The CN hydrolase domain occupies 2-242 (LNLTLAQLNF…EDILTVTLDL (241 aa)). Residue glutamate 41 is the Proton acceptor; for glutaminase activity of the active site. The active-site For glutaminase activity is the lysine 109. Tyrosine 115 serves as a coordination point for L-glutamine. The active-site Nucleophile; for glutaminase activity is cysteine 145. L-glutamine contacts are provided by serine 172 and lysine 178. A ligase region spans residues 287–567 (PKEEEEIYAA…RMPVTNKFFK (281 aa)). 316–323 (GLSGGIDS) is an ATP binding site. Deamido-NAD(+) is bound at residue asparagine 399. Threonine 423 provides a ligand contact to ATP. Positions 428 and 538 each coordinate deamido-NAD(+).

This sequence in the C-terminal section; belongs to the NAD synthetase family.

The catalysed reaction is deamido-NAD(+) + L-glutamine + ATP + H2O = L-glutamate + AMP + diphosphate + NAD(+) + H(+). Its pathway is cofactor biosynthesis; NAD(+) biosynthesis; NAD(+) from deamido-NAD(+) (L-Gln route): step 1/1. Its function is as follows. Catalyzes the ATP-dependent amidation of deamido-NAD to form NAD. Uses L-glutamine as a nitrogen source. The protein is Glutamine-dependent NAD(+) synthetase of Aquifex aeolicus (strain VF5).